The primary structure comprises 279 residues: Thiazole synthase (279 aa).

K116 functions as the Schiff-base intermediate with DXP in the catalytic mechanism. Residues G177, 203–204 (AG), and 225–226 (NS) contribute to the 1-deoxy-D-xylulose 5-phosphate site.

It belongs to the ThiG family. In terms of assembly, homotetramer. Forms heterodimers with either ThiH or ThiS.

Its subcellular location is the cytoplasm. The enzyme catalyses [ThiS sulfur-carrier protein]-C-terminal-Gly-aminoethanethioate + 2-iminoacetate + 1-deoxy-D-xylulose 5-phosphate = [ThiS sulfur-carrier protein]-C-terminal Gly-Gly + 2-[(2R,5Z)-2-carboxy-4-methylthiazol-5(2H)-ylidene]ethyl phosphate + 2 H2O + H(+). It functions in the pathway cofactor biosynthesis; thiamine diphosphate biosynthesis. Catalyzes the rearrangement of 1-deoxy-D-xylulose 5-phosphate (DXP) to produce the thiazole phosphate moiety of thiamine. Sulfur is provided by the thiocarboxylate moiety of the carrier protein ThiS. In vitro, sulfur can be provided by H(2)S. This chain is Thiazole synthase, found in Trichodesmium erythraeum (strain IMS101).